A 240-amino-acid chain; its full sequence is DNA repair protein RecO (240 aa).

This sequence belongs to the RecO family.

Involved in DNA repair and RecF pathway recombination. In Actinobacillus pleuropneumoniae serotype 5b (strain L20), this protein is DNA repair protein RecO.